The primary structure comprises 155 residues: Ribonuclease H (155 aa).

The RNase H type-1 domain occupies 9-150 (DGQQVEMWTD…ADALANQGME (142 aa)). Residues Asp-18, Glu-56, Asp-78, and Asp-142 each contribute to the Mg(2+) site.

The protein belongs to the RNase H family. In terms of assembly, monomer. The cofactor is Mg(2+).

The protein localises to the cytoplasm. It carries out the reaction Endonucleolytic cleavage to 5'-phosphomonoester.. Its function is as follows. Endonuclease that specifically degrades the RNA of RNA-DNA hybrids. The protein is Ribonuclease H of Bordetella pertussis (strain Tohama I / ATCC BAA-589 / NCTC 13251).